Consider the following 209-residue polypeptide: D-aminoacyl-tRNA deacylase 1 (209 aa).

3 residues coordinate Mg(2+): valine 4, glutamine 6, and cysteine 28. Residues 139–140 carry the Gly-cisPro motif, important for rejection of L-amino acids motif; the sequence is GP. The interval 142–209 is disordered; it reads TIELESPAPG…EGDVSSEREP (68 aa). 2 stretches are compositionally biased toward basic and acidic residues: residues 159 to 170 and 181 to 194; these read QLSKLEKQQQRK and SSKE…EDRS. Phosphoserine occurs at positions 197, 204, and 205.

Belongs to the DTD family. In terms of assembly, homodimer. Interacts with CDC45 and TOPBP1. In terms of processing, preferentially phosphorylated in cells arrested early in S phase. Phosphorylation in the C-terminus weakens the interaction with CDC45.

The protein resides in the nucleus. Its subcellular location is the cytoplasm. The catalysed reaction is glycyl-tRNA(Ala) + H2O = tRNA(Ala) + glycine + H(+). It carries out the reaction a D-aminoacyl-tRNA + H2O = a tRNA + a D-alpha-amino acid + H(+). An aminoacyl-tRNA editing enzyme that deacylates mischarged D-aminoacyl-tRNAs. Also deacylates mischarged glycyl-tRNA(Ala), protecting cells against glycine mischarging by AlaRS. Acts via tRNA-based rather than protein-based catalysis; rejects L-amino acids rather than detecting D-amino acids in the active site. By recycling D-aminoacyl-tRNA to D-amino acids and free tRNA molecules, this enzyme counteracts the toxicity associated with the formation of D-aminoacyl-tRNA entities in vivo and helps enforce protein L-homochirality. In terms of biological role, ATPase involved in DNA replication, may facilitate loading of CDC45 onto pre-replication complexes. This is D-aminoacyl-tRNA deacylase 1 (DTD1) from Bos taurus (Bovine).